Reading from the N-terminus, the 84-residue chain is Large ribosomal subunit protein bL27 (84 aa).

Positions 1–21 (MAHKKGASSTRNGRDSNAQRL) are disordered. The segment covering 7-19 (ASSTRNGRDSNAQ) has biased composition (polar residues).

The protein belongs to the bacterial ribosomal protein bL27 family.

This is Large ribosomal subunit protein bL27 from Clavibacter sepedonicus (Clavibacter michiganensis subsp. sepedonicus).